We begin with the raw amino-acid sequence, 382 residues long: Alanine racemase 1 (382 aa).

The Proton acceptor; specific for D-alanine role is filled by Lys39. Residue Lys39 is modified to N6-(pyridoxal phosphate)lysine. Arg138 contacts substrate. Tyr265 functions as the Proton acceptor; specific for L-alanine in the catalytic mechanism. Substrate is bound at residue Met312.

Belongs to the alanine racemase family. Requires pyridoxal 5'-phosphate as cofactor.

It catalyses the reaction L-alanine = D-alanine. The protein operates within amino-acid biosynthesis; D-alanine biosynthesis; D-alanine from L-alanine: step 1/1. Catalyzes the interconversion of L-alanine and D-alanine. May also act on other amino acids. This chain is Alanine racemase 1 (alr1), found in Staphylococcus aureus (strain NCTC 8325 / PS 47).